The chain runs to 258 residues: Acetylglutamate kinase (258 aa).

Residues 41-42 (GG), R63, and N156 contribute to the substrate site.

This sequence belongs to the acetylglutamate kinase family. ArgB subfamily.

The protein localises to the cytoplasm. It carries out the reaction N-acetyl-L-glutamate + ATP = N-acetyl-L-glutamyl 5-phosphate + ADP. Its pathway is amino-acid biosynthesis; L-arginine biosynthesis; N(2)-acetyl-L-ornithine from L-glutamate: step 2/4. Catalyzes the ATP-dependent phosphorylation of N-acetyl-L-glutamate. The sequence is that of Acetylglutamate kinase from Geobacillus kaustophilus (strain HTA426).